The primary structure comprises 120 residues: C-C motif chemokine 23 (120 aa).

The signal sequence occupies residues Met-1 to Ala-21. 3 disulfide bridges follow: Cys-54–Cys-78, Cys-55–Cys-94, and Cys-65–Cys-105.

It belongs to the intercrine beta (chemokine CC) family. In terms of processing, the N-terminal is proteolytically cleaved by proteases associated with inflammatory responses. The processed forms, CCL23(19-99), CCL23(22-99), CCL23(27-99) and CCL23(30-99) exhibit increase in CCR1-mediated signaling and chemotaxis assays in vitro. High levels in adult lung, liver, skeletal muscle and pancreas. Moderate levels in fetal liver, adult bone marrow and placenta. The short form is the major species and the longer form was detected only in very low abundance. CCL23(19-99), CCL23(22-99), CCL23(27-99), CCL23(30-99) are found in high levels in synovial fluids from rheumatoid patients.

The protein localises to the secreted. Its function is as follows. Shows chemotactic activity for monocytes, resting T-lymphocytes, and neutrophils, but not for activated lymphocytes. Inhibits proliferation of myeloid progenitor cells in colony formation assays. This protein can bind heparin. Binds CCR1. CCL23(19-99), CCL23(22-99), CCL23(27-99), CCL23(30-99) are more potent chemoattractants than CCL23. The polypeptide is C-C motif chemokine 23 (CCL23) (Homo sapiens (Human)).